A 155-amino-acid chain; its full sequence is Alanine- and arginine-rich domain-containing protein (155 aa).

This chain is Alanine- and arginine-rich domain-containing protein (AARD), found in Homo sapiens (Human).